The following is a 119-amino-acid chain: MARVKTGKTAHKRHKKVLKLAKGFRGARSKLFRPANQFVMKSLKYAYIGRKLRKRDFRKLWITRINAATRANGLSYSKFMNGLKLAGIDMNRKVLSEMAIYDKEGFAQLVETAKQKLNA.

It belongs to the bacterial ribosomal protein bL20 family.

Binds directly to 23S ribosomal RNA and is necessary for the in vitro assembly process of the 50S ribosomal subunit. It is not involved in the protein synthesizing functions of that subunit. The protein is Large ribosomal subunit protein bL20 of Alkaliphilus oremlandii (strain OhILAs) (Clostridium oremlandii (strain OhILAs)).